The primary structure comprises 272 residues: ATP phosphoribosyltransferase regulatory subunit (272 aa).

This sequence belongs to the class-II aminoacyl-tRNA synthetase family. HisZ subfamily. As to quaternary structure, heteromultimer composed of HisG and HisZ subunits.

Its subcellular location is the cytoplasm. It participates in amino-acid biosynthesis; L-histidine biosynthesis; L-histidine from 5-phospho-alpha-D-ribose 1-diphosphate: step 1/9. Its function is as follows. Required for the first step of histidine biosynthesis. May allow the feedback regulation of ATP phosphoribosyltransferase activity by histidine. This Staphylococcus aureus (strain MRSA252) protein is ATP phosphoribosyltransferase regulatory subunit.